A 376-amino-acid chain; its full sequence is Cellular tumor antigen p53 (376 aa).

Residues 1–36 (MEGNGERDTMMVEPPDSQEFAELWLRNLIVRDNSLW) form a transcription activation (acidic) region. A DNA-binding region spans residues 77–268 (DYPGLLNFTL…KTEESNFKKQ (192 aa)). Residues 150-159 (RCPHHERSND) are compositionally biased toward basic and acidic residues. A disordered region spans residues 150-171 (RCPHHERSNDSSDGPAPPGHLL). 4 residues coordinate Zn(2+): C151, H154, C214, and C218. Positions 249–256 (RVCACPGR) are interaction with DNA. Composition is skewed to basic and acidic residues over residues 257–270 (DRKT…KQQE) and 282–294 (SMKD…EASK). Positions 257-306 (DRKTEESNFKKQQEPKTSGKTLTKRSMKDPPSHPEASKKSKNSSSDDEIY) are disordered. The Bipartite nuclear localization signal signature appears at 280–297 (KRSMKDPPSHPEASKKSK). The interval 303–334 (DEIYTLQVRGKERYEFLKKINDGLELSDVVPP) is oligomerization. Positions 317-328 (EFLKKINDGLEL) match the Nuclear export signal motif. The disordered stretch occupies residues 342–376 (QKLLSKTCRKERDGAAGEPKRGKKRLVKEEKCDSD). Positions 347–372 (KTCRKERDGAAGEPKRGKKRLVKEEK) are basic (repression of DNA-binding). The segment covering 349–361 (CRKERDGAAGEPK) has biased composition (basic and acidic residues).

The protein belongs to the p53 family. Binds DNA as a homotetramer. Zn(2+) is required as a cofactor.

It is found in the cytoplasm. Its subcellular location is the nucleus. Multifunctional transcription factor that induces cell cycle arrest, DNA repair or apoptosis upon binding to its target DNA sequence. Acts as a tumor suppressor in many tumor types; induces growth arrest or apoptosis depending on the physiological circumstances and cell type. Negatively regulates cell division by controlling expression of a set of genes required for this process. One of the activated genes is an inhibitor of cyclin-dependent kinases. Apoptosis induction seems to be mediated either by stimulation of BAX and FAS antigen expression, or by repression of Bcl-2 expression. In Ictalurus punctatus (Channel catfish), this protein is Cellular tumor antigen p53 (tp53).